The chain runs to 357 residues: Dihydroorotate dehydrogenase (quinone) (357 aa).

FMN-binding positions include Ala61 to Lys65 and Thr85. Lys65 serves as a coordination point for substrate. A substrate-binding site is contributed by Asn110–Phe114. The FMN site is built by Asn141 and Asn172. Asn172 contacts substrate. Ser175 (nucleophile) is an active-site residue. Asn177 provides a ligand contact to substrate. Residues Lys217 and Gly245 each contribute to the FMN site. Position 246-247 (Asn246–Thr247) interacts with substrate. FMN-binding positions include Gly268, Gly297, and Tyr318–Ser319.

Belongs to the dihydroorotate dehydrogenase family. Type 2 subfamily. Monomer. FMN is required as a cofactor.

The protein resides in the cell membrane. The enzyme catalyses (S)-dihydroorotate + a quinone = orotate + a quinol. The protein operates within pyrimidine metabolism; UMP biosynthesis via de novo pathway; orotate from (S)-dihydroorotate (quinone route): step 1/1. Functionally, catalyzes the conversion of dihydroorotate to orotate with quinone as electron acceptor. The chain is Dihydroorotate dehydrogenase (quinone) from Xanthobacter autotrophicus (strain ATCC BAA-1158 / Py2).